Reading from the N-terminus, the 257-residue chain is Protein YIPF5 (257 aa).

The Cytoplasmic portion of the chain corresponds to 1–124 (MSGFDNLNSG…RASDGSIMNE (124 aa)). The tract at residues 75–106 (PPTPQTFYGDSFEEEPPLLEELGINFDHIWQK) is interaction with Sec23. A helical transmembrane segment spans residues 125–145 (TDLAGPVVFCLAFGATLLLAG). A topological domain (lumenal) is located at residue lysine 146. The chain crosses the membrane as a helical span at residues 147–167 (IQFGYVYGISAIGCLGMFCLL). The Cytoplasmic portion of the chain corresponds to 168–173 (NLMSMT). The chain crosses the membrane as a helical span at residues 174-194 (GVSFGCVASVLGYCLLPMILL). Residues 195 to 196 (SS) are Lumenal-facing. Residues 197–217 (FAVVFSLQGMVGILLTATIIG) traverse the membrane as a helical segment. Topologically, residues 218 to 236 (WCSFSASKIFISALAMDGQ) are cytoplasmic. A helical transmembrane segment spans residues 237 to 257 (QLLVAYPCALLYGVFALISVF).

It belongs to the YIP1 family. Interacts with the COPII coat components Sec23 (SEC23A and/or SEC23B) and Sec24 (SEC24A and/or SEC24B). Interacts with YIF1A. May interact with RAB1A. Interacts with YIPF3 and YIPF4.

Its subcellular location is the endoplasmic reticulum membrane. The protein resides in the golgi apparatus. It localises to the cis-Golgi network membrane. It is found in the cytoplasmic vesicle. The protein localises to the COPII-coated vesicle. Its function is as follows. Plays a role in transport between endoplasmic reticulum and Golgi. In pancreatic beta cells, required to transport proinsulin from endoplasmic reticulum into the Golgi. The sequence is that of Protein YIPF5 from Rattus norvegicus (Rat).